The sequence spans 170 residues: UPF0260 protein RPB_3505 (170 aa).

Belongs to the UPF0260 family.

In Rhodopseudomonas palustris (strain HaA2), this protein is UPF0260 protein RPB_3505.